The primary structure comprises 388 residues: Phosphopentomutase (388 aa).

Residues D10, D282, H287, D323, H324, and H335 each contribute to the Mn(2+) site.

This sequence belongs to the phosphopentomutase family. Mn(2+) serves as cofactor.

The protein localises to the cytoplasm. It catalyses the reaction 2-deoxy-alpha-D-ribose 1-phosphate = 2-deoxy-D-ribose 5-phosphate. The enzyme catalyses alpha-D-ribose 1-phosphate = D-ribose 5-phosphate. It participates in carbohydrate degradation; 2-deoxy-D-ribose 1-phosphate degradation; D-glyceraldehyde 3-phosphate and acetaldehyde from 2-deoxy-alpha-D-ribose 1-phosphate: step 1/2. Isomerase that catalyzes the conversion of deoxy-ribose 1-phosphate (dRib-1-P) and ribose 1-phosphate (Rib-1-P) to deoxy-ribose 5-phosphate (dRib-5-P) and ribose 5-phosphate (Rib-5-P), respectively. This chain is Phosphopentomutase, found in Acetivibrio thermocellus (strain ATCC 27405 / DSM 1237 / JCM 9322 / NBRC 103400 / NCIMB 10682 / NRRL B-4536 / VPI 7372) (Clostridium thermocellum).